Consider the following 84-residue polypeptide: MKTSMLAVFVALPLAFVLTAATEERAHPNELVNSLVELVKLDAERGVDKEGCKYMFGSCGKSDDCCPKLACKRTFNYCAWDGSV.

A signal peptide spans 1–21 (MKTSMLAVFVALPLAFVLTAA). Positions 22–45 (TEERAHPNELVNSLVELVKLDAER) are excised as a propeptide. Cystine bridges form between Cys52–Cys66, Cys59–Cys71, and Cys65–Cys78.

The protein belongs to the neurotoxin 10 (Hwtx-1) family. 41 (Jztx-36) subfamily. In terms of tissue distribution, expressed by the venom gland.

It localises to the secreted. Omega-conotoxins act at presynaptic membranes, they bind and block voltage-gated calcium channels (Cav). This toxin inhibits barium currents (IBa) mediated by L-type voltage-gated calcium channels Cav1.2/CACNA1C (IC(50)=825 nM) and Cav1.3/CACNA1C (IC(50)=2240 nM). The sequence is that of Omega-theraphotoxin-Pm1a from Pelinobius muticus (King baboon spider).